The chain runs to 282 residues: PTS system sorbose-specific EIID component (282 aa).

One can recognise a PTS EIID domain in the interval 13-281; the sequence is TKITKGDMFK…GIVGYWLGIL (269 aa). The next 4 membrane-spanning stretches (helical) occupy residues 135–155, 197–217, 234–254, and 261–281; these read LGAS…FVAF, GLFI…PLVV, ILDQ…CMYL, and PILL…LGIL.

The protein localises to the cell membrane. In terms of biological role, the phosphoenolpyruvate-dependent sugar phosphotransferase system (PTS), a major carbohydrate active transport system, catalyzes the phosphorylation of incoming sugar substrates concomitant with their translocation across the cell membrane. The enzyme II SorABCD PTS system is involved in L-sorbose transport. In Lacticaseibacillus casei (Lactobacillus casei), this protein is PTS system sorbose-specific EIID component.